Consider the following 316-residue polypeptide: ATP synthase gamma chain (316 aa).

The protein belongs to the ATPase gamma chain family. In terms of assembly, F-type ATPases have 2 components, CF(1) - the catalytic core - and CF(0) - the membrane proton channel. CF(1) has five subunits: alpha(3), beta(3), gamma(1), delta(1), epsilon(1). CF(0) has three main subunits: a, b and c.

The protein localises to the cellular thylakoid membrane. Functionally, produces ATP from ADP in the presence of a proton gradient across the membrane. The gamma chain is believed to be important in regulating ATPase activity and the flow of protons through the CF(0) complex. This chain is ATP synthase gamma chain, found in Prochlorococcus marinus (strain AS9601).